Reading from the N-terminus, the 46-residue chain is Defensin Tk-AMP-D6 (46 aa).

4 disulfide bridges follow: Cys-3/Cys-46, Cys-14/Cys-34, Cys-20/Cys-40, and Cys-24/Cys-42.

Plant defense peptide. In Triticum kiharae (Wheat), this protein is Defensin Tk-AMP-D6.